The sequence spans 404 residues: Mitochondrial potassium channel (404 aa).

The transit peptide at Met1 to Thr30 directs the protein to the mitochondrion. Over Leu31–Lys196 the chain is Mitochondrial matrix. Ser65 carries the post-translational modification Phosphoserine. A coiled-coil region spans residues Val111–Asp138. The chain crosses the membrane as a helical span at residues Asn197–Val217. The Mitochondrial intermembrane portion of the chain corresponds to Asn218 to Val380. Residues Tyr381–Phe401 form a helical membrane-spanning segment. The Mitochondrial matrix segment spans residues Arg402–Ser404.

As to quaternary structure, the mitochondrial potassium channel (mitoK(ATP)) forms a heteromultimer.

Its subcellular location is the mitochondrion inner membrane. It carries out the reaction K(+)(in) = K(+)(out). Channel activity inhibited by ATP via ABCB8/MITOSUR subunit. Pore-forming subunit of the mitochondrial ATP-gated potassium channel (mitoK(ATP)). Together with ATP-binding subunit ABCB8/MITOSUR of the mitoK(ATP) channel, mediates ATP-dependent K(+) currents across the mitochondrial inner membrane. An increase in ATP intracellular levels closes the channel, inhibiting K(+) transport, whereas a decrease in ATP levels enhances K(+) uptake in the mitochondrial matrix. May contribute to the homeostatic control of cellular metabolism under stress conditions by regulating the mitochondrial matrix volume. This is Mitochondrial potassium channel from Bos taurus (Bovine).